The chain runs to 178 residues: MSEVRLPPLRALDDFVLGSARLVAPDPCDPQRWCHRVINNLLYYQTNYLICFGLGLALAGYVRPLHTLLSALVVAVALGMLVCAAENRAAVRRCRRSHPAACLAAVLAVGFLVLWAAGGAGTFLLSIAGPVLLILVHASLRLRNLKNKIENKIESIGLKRTPMGLLLEALGQEQEAGS.

Topologically, residues 1-41 (MSEVRLPPLRALDDFVLGSARLVAPDPCDPQRWCHRVINNL) are cytoplasmic. Residues 42 to 62 (LYYQTNYLICFGLGLALAGYV) form a helical membrane-spanning segment. Residues 63–64 (RP) are Extracellular-facing. The chain crosses the membrane as a helical span at residues 65–85 (LHTLLSALVVAVALGMLVCAA). The Cytoplasmic segment spans residues 86 to 96 (ENRAAVRRCRR). The helical transmembrane segment at 97-119 (SHPAACLAAVLAVGFLVLWAAGG) threads the bilayer. At 120–122 (AGT) the chain is on the extracellular side. Residues 123–140 (FLLSIAGPVLLILVHASL) form a helical membrane-spanning segment. Residues 141-178 (RLRNLKNKIENKIESIGLKRTPMGLLLEALGQEQEAGS) are Cytoplasmic-facing.

This sequence belongs to the PRA1 family. Interacts with CCR5 and GDE1.

The protein resides in the endosome membrane. May be involved in ER/Golgi transport and vesicular traffic. Plays a proapoptotic role in cerulenin-induced neuroblastoma apoptosis. This chain is PRA1 family protein 2 (PRAF2), found in Bos taurus (Bovine).